Consider the following 114-residue polypeptide: Hydrogenase maturation factor HypA (114 aa).

His2 is a Ni(2+) binding site. Positions 73, 76, 90, and 93 each coordinate Zn(2+).

This sequence belongs to the HypA/HybF family.

Involved in the maturation of [NiFe] hydrogenases. Required for nickel insertion into the metal center of the hydrogenase. The polypeptide is Hydrogenase maturation factor HypA (Klebsiella pneumoniae subsp. pneumoniae (strain ATCC 700721 / MGH 78578)).